A 499-amino-acid polypeptide reads, in one-letter code: MINKKISLGVLSILTAFSLQSVSYACTGFIIGKDLTKDGSLLYGRTEDLEPHHNKNFIVRLAKDNPAGEKWKDPSNGFEYPLPEHSYRYSAIPDVTPNKGVYDEAGFNEFGVSMSATVSTSANDAIQKIDPYVKNGLAESSMASVILPSVKTAREGVALIAKIVTEKGAAEGNIVTLADKDGIWYMEILSGHQYVAIKFPDDKYAVFPNTFYLGHVDFNDKENTIASEDVEKVAKKAKSYTEVDGKFHIAKSYNPPLNDANRSRSFSGIKSLDPDSKVTYKDSNYELLQSTDKTFSLEDAMKLQRNRFEGLDLKPLDQMALDGKGKPKSKKAVKGYAYPISNPNVMEAHIFQLKKDIPAELGGGVMWLSIGSPRNAPYLPYLGNISRTYEAYQEKSTQYNDKSWYWTVSHINDLVAAHPKPFGTKVIDEMKGLEKTWIAEQDKTTKEISDLVVSDPKAAQEKADKISLDRAEKTFKRLKAIEAKLVKEKPKNKKGLNRS.

Cys26 is an active-site residue.

This sequence belongs to the peptidase C69 family.

It catalyses the reaction an L-aminoacyl-L-amino acid + H2O = 2 an L-alpha-amino acid. The chain is Probable dipeptidase B (pepDB) from Streptococcus pyogenes serotype M3 (strain ATCC BAA-595 / MGAS315).